Reading from the N-terminus, the 213-residue chain is Nucleolar protein 12 (213 aa).

Positions 33–96 (GFHKRKVERK…RLVTAKTESV (64 aa)) form a coiled coil. The tract at residues 118–213 (ARLLGLTPPE…LTGKARHSGE (96 aa)) is disordered. Composition is skewed to basic residues over residues 170 to 182 (AHSR…KHPR) and 198 to 213 (KAQR…HSGE).

It belongs to the RRP17 family. As to quaternary structure, interacts with KIAA1191.

It localises to the nucleus. It is found in the nucleolus. Its subcellular location is the cytoplasm. Its function is as follows. Multifunctional RNA binding protein that plays a role in RNA metabolism and DNA maintenance. Participates in the resolution of DNA stress and the maintenance of genome integrity by localizing to sites of DNA insults. Also plays a role in proper nucleolar organization by limiting nucleolar size and regulating nucleolar number. Mechanistically, regulates the nucleolar levels of fibrillarin and nucleolin, two key players in pre-rRNA processing and ribosome assembly. The sequence is that of Nucleolar protein 12 (NOL12) from Homo sapiens (Human).